Reading from the N-terminus, the 934-residue chain is UPF0182 protein sync_1321 (934 aa).

The next 9 helical transmembrane spans lie at 2–22, 45–65, 86–106, 129–149, 165–185, 208–228, 251–271, 300–320, and 327–347; these read AKII…IVII, LLLQ…CALW, GYRY…VLAI, FSTG…IMFG, VCIC…FSIP, IAFG…TALW, HGLR…MWLS, LGSI…FSSV, and LILA…FPLM.

It belongs to the UPF0182 family.

The protein resides in the cell membrane. The polypeptide is UPF0182 protein sync_1321 (Synechococcus sp. (strain CC9311)).